We begin with the raw amino-acid sequence, 480 residues long: Aspartyl/glutamyl-tRNA(Asn/Gln) amidotransferase subunit B (480 aa).

It belongs to the GatB/GatE family. GatB subfamily. As to quaternary structure, heterotrimer of A, B and C subunits.

It carries out the reaction L-glutamyl-tRNA(Gln) + L-glutamine + ATP + H2O = L-glutaminyl-tRNA(Gln) + L-glutamate + ADP + phosphate + H(+). The enzyme catalyses L-aspartyl-tRNA(Asn) + L-glutamine + ATP + H2O = L-asparaginyl-tRNA(Asn) + L-glutamate + ADP + phosphate + 2 H(+). Allows the formation of correctly charged Asn-tRNA(Asn) or Gln-tRNA(Gln) through the transamidation of misacylated Asp-tRNA(Asn) or Glu-tRNA(Gln) in organisms which lack either or both of asparaginyl-tRNA or glutaminyl-tRNA synthetases. The reaction takes place in the presence of glutamine and ATP through an activated phospho-Asp-tRNA(Asn) or phospho-Glu-tRNA(Gln). In Caldicellulosiruptor saccharolyticus (strain ATCC 43494 / DSM 8903 / Tp8T 6331), this protein is Aspartyl/glutamyl-tRNA(Asn/Gln) amidotransferase subunit B.